The following is an 893-amino-acid chain: MKDLSSAEIRQMFLDFFASKGHEVVPSKNLIPQDDPTLLWINSGVATLKKYFDGTVVPNNPRITNSQKAIRTNDIENVGKTARHHTLFEMMGNFSIGDYFKEQAIPWAWELLTSPEWYGLDAEKLYVTVYPKDQEARKIWEEKTSLPDGHIYEVEDNFWDIGEGPSGPDSEIFFDRGSSFQDLPDDDPEMYPGGENERYLEIWNLVFSQFNHLPGLTDNSQYPELPHKNIDTGMGLERVVSVFQNGRTNFDTDLFLPIIRATEKLSNQFTYDDSQDSEVNTSFKVIADHIRAITFAIGDGALPSNEGRGYVIRRLLRRAVLHGQKLGIKGQFLTNLVPIVGDIMESYYPEVKANTAKIQKTVAAEEKRFNATLTGGLSLLNDVIKEAKKTGQTQISGADAFKLSDTYGFPLELTQEQAEDAGLTVDVDRYNDELQAQRVRARAARSNTKSMGVQNAVLTDLRVDSKYVGWSQTEVNHAEIVAIIGEDEQGVDALLDNADVDATVQVAFDVTPFYAEMGGQVPDFGDVLNTNGDVIAHVTDVQTAPNGQHIHTVDVISSFTLGDKVDLKVDMARHIAVSKNHTATHMLDQSLRNVLGGDVHQAGSLVEPEYLRFDFNNEGPVSSEDLDKIESMMNQEIAKNLPVTWLETDIESAKKLGAVAVFGEKYGDQVRVVSIGDFNKEFDGGTHANSTAELGLFKIVSESGIGAGVRRIEAVTGLQALSQYKAQEKALKEIATALKAQKLTDAPEKVYDLQADLRTVQRHAESLEAKLANATAGEIFNDVKTVNGHTYITAQLQVSGMDGLRQVADNWKENYPSDVLVLATVADEKVSLIVAAAPDANQSGIKAGELIKSIAPHIGGGGGGRPDMAQAGGKKPAGIPDAFAAVSAFLADK.

It belongs to the class-II aminoacyl-tRNA synthetase family.

Its subcellular location is the cytoplasm. It catalyses the reaction tRNA(Ala) + L-alanine + ATP = L-alanyl-tRNA(Ala) + AMP + diphosphate. Catalyzes the attachment of alanine to tRNA(Ala) in a two-step reaction: alanine is first activated by ATP to form Ala-AMP and then transferred to the acceptor end of tRNA(Ala). Also edits incorrectly charged Ser-tRNA(Ala) and Gly-tRNA(Ala) via its editing domain. In Leuconostoc mesenteroides subsp. mesenteroides (strain ATCC 8293 / DSM 20343 / BCRC 11652 / CCM 1803 / JCM 6124 / NCDO 523 / NBRC 100496 / NCIMB 8023 / NCTC 12954 / NRRL B-1118 / 37Y), this protein is Alanine--tRNA ligase (alaS).